A 256-amino-acid chain; its full sequence is Small ribosomal subunit protein eS1A (256 aa).

Position 2 is an N-acetylalanine; partial (Ala-2).

The protein belongs to the eukaryotic ribosomal protein eS1 family. In terms of assembly, component of the small ribosomal subunit. Mature ribosomes consist of a small (40S) and a large (60S) subunit. The 40S subunit contains about 33 different proteins and 1 molecule of RNA (18S). The 60S subunit contains about 49 different proteins and 3 molecules of RNA (25S, 5.8S and 5S).

The protein resides in the cytoplasm. The protein is Small ribosomal subunit protein eS1A of Clavispora lusitaniae (strain ATCC 42720) (Yeast).